The sequence spans 902 residues: Alanine--tRNA ligase (902 aa).

4 residues coordinate Zn(2+): His-567, His-571, Cys-671, and His-675.

Belongs to the class-II aminoacyl-tRNA synthetase family. The cofactor is Zn(2+).

It is found in the cytoplasm. The catalysed reaction is tRNA(Ala) + L-alanine + ATP = L-alanyl-tRNA(Ala) + AMP + diphosphate. Catalyzes the attachment of alanine to tRNA(Ala) in a two-step reaction: alanine is first activated by ATP to form Ala-AMP and then transferred to the acceptor end of tRNA(Ala). Also edits incorrectly charged Ser-tRNA(Ala) and Gly-tRNA(Ala) via its editing domain. This chain is Alanine--tRNA ligase, found in Mycoplasmoides gallisepticum (strain R(low / passage 15 / clone 2)) (Mycoplasma gallisepticum).